We begin with the raw amino-acid sequence, 559 residues long: MISDNARAGMQQAPARSLFNALGFTPEEMKKPMVGIVSSFNEIVPGHMNIDKIVEAVKLGVAEAGGVPVVFPAIAVCDGIAMGHVGMKYSLVTRDLIADSTECMAIAHQFDALVMVPNCDKNVPGLLMAAARLNLPTVFVSGGPMLAGHVKGRKRSLSSMFEAVGSYAAGTMTEDDVCEYENKVCPTCGSCSGMYTANSMNCLTEALGMGLRGNGTIPAVYSERIRLAKHAGMAVMDMYNKGIKARDIITKDAIMNALTVDMALGCSTNSMLHLPAIAHEIGFDFDISFANPISERTPNLCHLAPAGPTYMEDLNEAGGVWAVMKELADIGLLNTDCMTVTGKTVGENIKNAVNRDPEVIRPVDNPYSKTGGLAVLKGNLAPDGSVVKRSAVVDEMMVHEGPARVFDCEEDAIAAIKGGKIVEGDVVVIRYEGPKGGPGMREMLNPTSAIAGMGLGSSVALITDGRFSGASRGASIGHVSPEAAVGGPIALVEEGDIIKIDIPNMKLELDVSDEVLAERKAKWQPREPKVTTGYLKRYAALVTSGNRGAILALPGEQNA.

Aspartate 78 serves as a coordination point for Mg(2+). Position 119 (cysteine 119) interacts with [2Fe-2S] cluster. Residues aspartate 120 and lysine 121 each contribute to the Mg(2+) site. At lysine 121 the chain carries N6-carboxylysine. Residue cysteine 191 participates in [2Fe-2S] cluster binding. Mg(2+) is bound at residue glutamate 442. Residue serine 468 is the Proton acceptor of the active site.

Belongs to the IlvD/Edd family. As to quaternary structure, homodimer. It depends on [2Fe-2S] cluster as a cofactor. Mg(2+) serves as cofactor.

It carries out the reaction (2R)-2,3-dihydroxy-3-methylbutanoate = 3-methyl-2-oxobutanoate + H2O. It catalyses the reaction (2R,3R)-2,3-dihydroxy-3-methylpentanoate = (S)-3-methyl-2-oxopentanoate + H2O. It functions in the pathway amino-acid biosynthesis; L-isoleucine biosynthesis; L-isoleucine from 2-oxobutanoate: step 3/4. Its pathway is amino-acid biosynthesis; L-valine biosynthesis; L-valine from pyruvate: step 3/4. Functions in the biosynthesis of branched-chain amino acids. Catalyzes the dehydration of (2R,3R)-2,3-dihydroxy-3-methylpentanoate (2,3-dihydroxy-3-methylvalerate) into 2-oxo-3-methylpentanoate (2-oxo-3-methylvalerate) and of (2R)-2,3-dihydroxy-3-methylbutanoate (2,3-dihydroxyisovalerate) into 2-oxo-3-methylbutanoate (2-oxoisovalerate), the penultimate precursor to L-isoleucine and L-valine, respectively. This Agathobacter rectalis (strain ATCC 33656 / DSM 3377 / JCM 17463 / KCTC 5835 / VPI 0990) (Eubacterium rectale) protein is Dihydroxy-acid dehydratase.